A 102-amino-acid polypeptide reads, in one-letter code: NADH-quinone oxidoreductase subunit K (102 aa).

The next 3 membrane-spanning stretches (helical) occupy residues 6 to 26 (LIAMMILAAGLFAIGLFGVLA), 30 to 50 (IMFQLVALEVALSGPALGFVA), and 63 to 83 (MFILVLTLAAAEVAVGLALFL).

The protein belongs to the complex I subunit 4L family. In terms of assembly, NDH-1 is composed of 14 different subunits. Subunits NuoA, H, J, K, L, M, N constitute the membrane sector of the complex.

Its subcellular location is the cell inner membrane. It carries out the reaction a quinone + NADH + 5 H(+)(in) = a quinol + NAD(+) + 4 H(+)(out). Its function is as follows. NDH-1 shuttles electrons from NADH, via FMN and iron-sulfur (Fe-S) centers, to quinones in the respiratory chain. The immediate electron acceptor for the enzyme in this species is believed to be ubiquinone. Couples the redox reaction to proton translocation (for every two electrons transferred, four hydrogen ions are translocated across the cytoplasmic membrane), and thus conserves the redox energy in a proton gradient. This Rhodopseudomonas palustris (strain BisB5) protein is NADH-quinone oxidoreductase subunit K.